The primary structure comprises 234 residues: Core atranone cluster (CAC) protein 1 (234 aa).

The protein operates within mycotoxin biosynthesis. Functionally, part of the core atranone cluster (CAC) which products are predicted to catalyze most or all steps of mycotoxin atranone synthesis, starting from geranylgeranyl pyrophosphate (GGPP). The initial cyclization of GGPP to dolabellane is probably performed by the terpene cyclase ATR13. The Baeyer-Villiger oxidation near the end of the atranone synthesis, which converts atranones D and E to atranones F and G is predicted to be catalyzed by the monooxygenase ATR8. Of the CAC's other predicted gene products, the reducing PKS ATR6 might synthesize a polyketide chain. This polyketide is probably transferred onto the atranone backbone by the polyketide transferase ATR5. Other predicted CAC products include 4 oxygenases (ATR2, ATR3, ATR4, and ATR14), 3 short-chain reductases (ATR7, ATR9, and ATR10), and a methyltransferase (ATR12). These may all be involved in the various steps of atranone biosynthesis, although their specific roles must await experimental determination. The polypeptide is Core atranone cluster (CAC) protein 1 (Stachybotrys chlorohalonatus (strain IBT 40285)).